A 186-amino-acid chain; its full sequence is Elongation factor P (186 aa).

The protein belongs to the elongation factor P family.

The protein resides in the cytoplasm. Its pathway is protein biosynthesis; polypeptide chain elongation. Involved in peptide bond synthesis. Stimulates efficient translation and peptide-bond synthesis on native or reconstituted 70S ribosomes in vitro. Probably functions indirectly by altering the affinity of the ribosome for aminoacyl-tRNA, thus increasing their reactivity as acceptors for peptidyl transferase. This chain is Elongation factor P, found in Laribacter hongkongensis (strain HLHK9).